Consider the following 1040-residue polypeptide: MQVLPPSSTGGPSRLFIMRPVATTLLMVAILLAGIIGYQALPVSALPEVDYPTIQVVTLYPGASPDVMTSAVTAPLERQFGQMSGLKQMSSQSSGGASVITLQFQLTLPLDVAEQEVQAAINAATNLLPSDLPNPPVYSKVNPADPPIMTLAVTSTAMPMTQVEDMVETRVAQKISQISGVGLVTLSGGQRPAVRVKLNAQAIAALGLTSETVRTAITGANVNSAKGSLDGPSRAVTLSANDQMQSAEEYRQLIIAYQNGAPIRLGDVATVEQGAENSWLGAWANKEQAIVMNVQRQPGANIISTADSIRQMLPQLTESLPKSVKVTVLSDRTTNIRASVDDTQFELMMAIALVVMIIYLFLRNIPATIIPGVAVPLSLIGTFAVMVFLDFSINNLTLMALTIATGFVVDDAIVVIENISRYIEKGEKPLAAALKGAGEIGFTIISLTFSLIAVLIPLLFMGDIVGRLFREFAITLAVAILISAVVSLTLTPMMCARMLSQESLRKQNRFSRASEKMFERIIAAYGQGLAKVLNHPWLTLSVALSTLLLSVLLWVFIPKGFFPVQDNGIIQGTLQAPQSSSFANMAQRQRQVADVILQDPAVQSLTSFVGVDGTNPSLNSARLQINLKPLDERDDRVQKVIARLQTAVDKVPGVDLFLQPTQDLTIDTQVSRTQYQFTLQATSLDALSTWVPQLMEKLQQLPQLSDVSSDWQDKGLVAYVNVDRDSASRLGISMADVDNALYNAFGQRLISTIYTQANQYRVVLEHNTENTPGLAALDTIRLTSSDGGVVPLSSIAKIEQRFAPLSINHLDQFPVTTISFNVPDNYSLGDAVQAIMDTEKTLNLPVDITTQFQGSTLAFQSALGSTVWLIVAAVVAMYIVLGILYESFIHPITILSTLPTAGVGALLALLIAGSELDVIAIIGIILLIGIVKKNAIMMIDFALAAEREQGMSPRDAIYQACLLRFRPILMTTLAALLGALPLMLSTGVGAELRRPLGIGMVGGLIVSQVLTLFTTPVIYLLFDRLALWTKSRFARHEEEA.

The next 12 membrane-spanning stretches (helical) occupy residues 25–45, 347–367, 369–389, 396–416, 440–460, 472–492, 537–557, 863–883, 888–908, 911–931, 968–988, and 998–1018; these read LLMV…PVSA, LMMA…NIPA, IIPG…MVFL, LTLM…IVVI, IGFT…PLLF, FAIT…TLTP, WLTL…WVFI, LGST…VLGI, FIHP…ALLA, IAGS…IGIV, ILMT…STGV, and IGMV…TPVI.

The protein belongs to the resistance-nodulation-cell division (RND) (TC 2.A.6) family. MdtB subfamily. Part of a tripartite efflux system composed of MdtA, MdtB and MdtC. MdtB forms a heteromultimer with MdtC.

It is found in the cell inner membrane. Functionally, the MdtABC tripartite complex confers resistance against novobiocin and deoxycholate. The polypeptide is Multidrug resistance protein MdtB (Escherichia coli O127:H6 (strain E2348/69 / EPEC)).